Consider the following 570-residue polypeptide: Acetolactate synthase (570 aa).

Glutamate 60 contacts thiamine diphosphate. FAD-binding positions include glutamine 162, phenylalanine 266–aspartate 287, and aspartate 308–aspartate 327. The interval serine 399–threonine 479 is thiamine pyrophosphate binding. Aspartate 450 is a binding site for Mg(2+).

It belongs to the TPP enzyme family. The cofactor is Mg(2+). Thiamine diphosphate is required as a cofactor.

It carries out the reaction 2 pyruvate + H(+) = (2S)-2-acetolactate + CO2. Its pathway is polyol metabolism; (R,R)-butane-2,3-diol biosynthesis; (R,R)-butane-2,3-diol from pyruvate: step 1/3. This is Acetolactate synthase (alsS) from Bacillus subtilis (strain 168).